Reading from the N-terminus, the 228-residue chain is UPF0173 metal-dependent hydrolase Lm4b_01588 (228 aa).

The protein belongs to the UPF0173 family.

This Listeria monocytogenes serotype 4b (strain CLIP80459) protein is UPF0173 metal-dependent hydrolase Lm4b_01588.